The sequence spans 377 residues: Nitric oxide reductase FlRd-NAD(+) reductase (377 aa).

The protein belongs to the FAD-dependent oxidoreductase family. FAD is required as a cofactor.

The protein resides in the cytoplasm. The enzyme catalyses 2 reduced [nitric oxide reductase rubredoxin domain] + NAD(+) + H(+) = 2 oxidized [nitric oxide reductase rubredoxin domain] + NADH. It participates in nitrogen metabolism; nitric oxide reduction. One of at least two accessory proteins for anaerobic nitric oxide (NO) reductase. Reduces the rubredoxin moiety of NO reductase. In Escherichia coli O45:K1 (strain S88 / ExPEC), this protein is Nitric oxide reductase FlRd-NAD(+) reductase.